A 117-amino-acid chain; its full sequence is Immunoglobulin heavy variable 1-58 (117 aa).

Positions Met-1–Ser-19 are cleaved as a signal peptide. The interval Gln-20–Ser-44 is framework-1. One can recognise an Ig-like domain in the interval Gln-20–Ala-117. An intrachain disulfide couples Cys-41 to Cys-115. Positions Gly-45–Ala-52 are complementarity-determining-1. Positions Val-53–Trp-69 are framework-2. The segment at Ile-70–Thr-77 is complementarity-determining-2. The tract at residues Asn-78–Cys-115 is framework-3. Residues Ala-116–Ala-117 form a complementarity-determining-3 region.

Immunoglobulins are composed of two identical heavy chains and two identical light chains; disulfide-linked.

The protein resides in the secreted. The protein localises to the cell membrane. Its function is as follows. V region of the variable domain of immunoglobulin heavy chains that participates in the antigen recognition. Immunoglobulins, also known as antibodies, are membrane-bound or secreted glycoproteins produced by B lymphocytes. In the recognition phase of humoral immunity, the membrane-bound immunoglobulins serve as receptors which, upon binding of a specific antigen, trigger the clonal expansion and differentiation of B lymphocytes into immunoglobulins-secreting plasma cells. Secreted immunoglobulins mediate the effector phase of humoral immunity, which results in the elimination of bound antigens. The antigen binding site is formed by the variable domain of one heavy chain, together with that of its associated light chain. Thus, each immunoglobulin has two antigen binding sites with remarkable affinity for a particular antigen. The variable domains are assembled by a process called V-(D)-J rearrangement and can then be subjected to somatic hypermutations which, after exposure to antigen and selection, allow affinity maturation for a particular antigen. This is Immunoglobulin heavy variable 1-58 from Homo sapiens (Human).